Here is a 121-residue protein sequence, read N- to C-terminus: Large ribosomal subunit protein bL12 (121 aa).

It belongs to the bacterial ribosomal protein bL12 family. In terms of assembly, homodimer. Part of the ribosomal stalk of the 50S ribosomal subunit. Forms a multimeric L10(L12)X complex, where L10 forms an elongated spine to which 2 to 4 L12 dimers bind in a sequential fashion. Binds GTP-bound translation factors.

Its function is as follows. Forms part of the ribosomal stalk which helps the ribosome interact with GTP-bound translation factors. Is thus essential for accurate translation. The protein is Large ribosomal subunit protein bL12 of Salmonella agona (strain SL483).